A 785-amino-acid polypeptide reads, in one-letter code: MNKRSLRVLEFNKVKEMLKKYAYSSSAKKLVDELVPYDNTYEINNRLEESNEALEILMKKGNPPIEGLCDIGDILQRAKKGGTLTPEQLLKVLGMLTATRRMQEFFKREDQEVSFPKLEDLAYILAPINDLEKEIERSILSEDEVSDNASTTLYNIRRSLKEKNSSVREKINSIVRSNSKYLQDSLYTIRGDRYVIPVKAEYKSSVPGLVHDQSSTGATLFIEPMGLVNLNNEIKELMLKEKAEIDRVLSALSLKVKMNAEHCESNFKILTNLDFIFSKGKYACELNAIKPMVRDDGIFNIMSGRHPLIEKDKVVPLDVVLGDEFDTLMITGPNTGGKTVTLKTVGLLHIMALSGLLIPASSNSSVSFFKEVFADIGDEQSIEQSLSTFSSHLTNIVNIMEYDNRQSLILFDELGGGTDPAEGAALAIAIIENLSSKGAKLIATTHYSELKAYALNKERVENASVEFDINTLRPTYRLLIGVPGKSNAFEISKRIGLGKEVIDCAKNYMSKENLEFEGLIRNLQEKSIIAKKDARDAKVIKDEADNLKKKYEQKLERLEKVKDKAYMDAREEAKKIVANAKDEADEILKAMRELEKLGIGSGGRQRLEEERKKLKDSLEEKEKNLYKMKENDGEVLEKVALGMEAFLPSLNQTVVVISMPDNRGEVQVEAGIMKISVKLKDLRKTKQSKVEKVKKKRELKLHFSKVENRIDLRGLDAEEACYRVDKYLDDAYMGNLGEVTIVHGKGTGILRKAINDMLKRHVHVKNYRLGGYGEGGDGATIVELK.

332 to 339 (GPNTGGKT) is a binding site for ATP. In terms of domain architecture, Smr spans 710–785 (IDLRGLDAEE…GDGATIVELK (76 aa)).

This sequence belongs to the DNA mismatch repair MutS family. MutS2 subfamily. In terms of assembly, homodimer. Binds to stalled ribosomes, contacting rRNA.

Its function is as follows. Endonuclease that is involved in the suppression of homologous recombination and thus may have a key role in the control of bacterial genetic diversity. Acts as a ribosome collision sensor, splitting the ribosome into its 2 subunits. Detects stalled/collided 70S ribosomes which it binds and splits by an ATP-hydrolysis driven conformational change. Acts upstream of the ribosome quality control system (RQC), a ribosome-associated complex that mediates the extraction of incompletely synthesized nascent chains from stalled ribosomes and their subsequent degradation. Probably generates substrates for RQC. The polypeptide is Endonuclease MutS2 (Clostridium botulinum (strain Alaska E43 / Type E3)).